A 291-amino-acid polypeptide reads, in one-letter code: MSGAVATGGAQSAGLGAAAAGCCSSASGAGSAALLSGGSGIAGRLPSRVLEHIFSYLELMDLLNCSLVCWHWNNCLSDENSEVWRSLCARSLSDEAMRSDILCNLASYKGKLKSFQHALSSHDCSRNVYIKKNGFTLHRNPIAQSTDGARGKIGFSEGRHAWEIWWEGPLGTVAVIGIATKRAPMQCQGYVALLGSDDQSWGWNLVDNNLLHNGEVNGNFPQCNNAPKYQIGERIRVILDMDDKTLAFERGFEFLGVAFRGLPKTCLFPAVSAVYGNTEVTMVYLGRPLDG.

The F-box domain occupies 39-87 (SGIAGRLPSRVLEHIFSYLELMDLLNCSLVCWHWNNCLSDENSEVWRSL). The B30.2/SPRY domain maps to 97 to 289 (MRSDILCNLA…VTMVYLGRPL (193 aa)).

It belongs to the FBXO45/Fsn family. In terms of assembly, probable component of a E3 ubiquitin ligase complex.

It participates in protein modification; protein ubiquitination. The polypeptide is F-box/SPRY domain-containing protein 1 (fbxo45) (Danio rerio (Zebrafish)).